Consider the following 356-residue polypeptide: tRNA N6-adenosine threonylcarbamoyltransferase (356 aa).

Residues histidine 115 and histidine 119 each contribute to the Fe cation site. Residues 138–142, aspartate 171, glycine 184, and asparagine 283 each bind substrate; that span reads LVSGG. Residue aspartate 311 participates in Fe cation binding.

This sequence belongs to the KAE1 / TsaD family. The cofactor is Fe(2+).

Its subcellular location is the cytoplasm. The enzyme catalyses L-threonylcarbamoyladenylate + adenosine(37) in tRNA = N(6)-L-threonylcarbamoyladenosine(37) in tRNA + AMP + H(+). Required for the formation of a threonylcarbamoyl group on adenosine at position 37 (t(6)A37) in tRNAs that read codons beginning with adenine. Is involved in the transfer of the threonylcarbamoyl moiety of threonylcarbamoyl-AMP (TC-AMP) to the N6 group of A37, together with TsaE and TsaB. TsaD likely plays a direct catalytic role in this reaction. This chain is tRNA N6-adenosine threonylcarbamoyltransferase, found in Prochlorococcus marinus (strain NATL1A).